We begin with the raw amino-acid sequence, 519 residues long: T-complex protein 1 subunit gamma (519 aa).

The protein belongs to the TCP-1 chaperonin family. As to quaternary structure, component of the T-complex protein 1 (TCP1) complex.

It is found in the cytoplasm. Functionally, molecular chaperone; assists the folding of proteins upon ATP hydrolysis. This Encephalitozoon cuniculi (strain GB-M1) (Microsporidian parasite) protein is T-complex protein 1 subunit gamma (CCT3).